Here is a 272-residue protein sequence, read N- to C-terminus: Dermonecrotic toxin LvSicTox-alphaIC1aiii (272 aa).

His-4 is an active-site residue. Glu-24 and Asp-26 together coordinate Mg(2+). Catalysis depends on His-40, which acts as the Nucleophile. Cystine bridges form between Cys-44–Cys-50 and Cys-46–Cys-189. Asp-84 lines the Mg(2+) pocket.

It belongs to the arthropod phospholipase D family. Class II subfamily. The cofactor is Mg(2+). As to expression, expressed by the venom gland.

The protein resides in the secreted. It catalyses the reaction an N-(acyl)-sphingosylphosphocholine = an N-(acyl)-sphingosyl-1,3-cyclic phosphate + choline. It carries out the reaction an N-(acyl)-sphingosylphosphoethanolamine = an N-(acyl)-sphingosyl-1,3-cyclic phosphate + ethanolamine. The enzyme catalyses a 1-acyl-sn-glycero-3-phosphocholine = a 1-acyl-sn-glycero-2,3-cyclic phosphate + choline. The catalysed reaction is a 1-acyl-sn-glycero-3-phosphoethanolamine = a 1-acyl-sn-glycero-2,3-cyclic phosphate + ethanolamine. In terms of biological role, dermonecrotic toxins cleave the phosphodiester linkage between the phosphate and headgroup of certain phospholipids (sphingolipid and lysolipid substrates), forming an alcohol (often choline) and a cyclic phosphate. This toxin acts on sphingomyelin (SM). It may also act on ceramide phosphoethanolamine (CPE), lysophosphatidylcholine (LPC) and lysophosphatidylethanolamine (LPE), but not on lysophosphatidylserine (LPS), and lysophosphatidylglycerol (LPG). It acts by transphosphatidylation, releasing exclusively cyclic phosphate products as second products. Induces dermonecrosis, hemolysis, increased vascular permeability, edema, inflammatory response, and platelet aggregation. The sequence is that of Dermonecrotic toxin LvSicTox-alphaIC1aiii from Loxosceles variegata (Recluse spider).